The following is a 720-amino-acid chain: MAALSEHFTLCGLLTGTDDGKSEILGVEPAGEPDRVLVTDSVQAVTLYKVSDQKPQGAWAVKQGQSITCPAVLNPESGEFIVVHDDKVLRIWKEDNVNLDIAFKATLSADVCRIHTLPNTDPLVLFKGGAVHFLDSLLTDPQQKIGTVLSDGERIVWSEIFADDGQPLIVYLTQQFSNYFVYIHKFSPVCVCKYHLKPNTEDSTILDCSGSVKSKIFTLLTLYSSGQVCQTPFPVSLINKETERVVSASPLLQLSGPIEVGALNFLDESHVAVLISSSSEQKECLSIWNTTFQTLQAARNFQQRTSAQLWCYDNKLFVPHGKTLVVVPYVCEASCLASVLGKSRNIQTSVLENVPFVNWDKLVGKDPETKPSNAGAQKKTRERKTNANAGNGTESILYPFDVQNISQTQTEAFVQQLLLGKEDTDFQITVGKITQGLVKRCMADPKFYPQSSFVQLVQTNTLSYSLCPDLLSLFLEKRDVPLLQLCLHSFPDVPEVILCSCLKAFLSISEKLVNAAQINTELASLYIDVGDKDKEHKYTEHPEEPSVLQNGFSPTALEEDSCDELIAESLPQTTQKATCPISIKRAVLVNSILISPYNESFLLPHLKDMSGDQVMFFLRYLLYLYLKFNENITINHPGKQMPTVSQIVDWMSMLLDAHFATVVMLSDAKALLNKIQKTVKSQLKFYSEMNKIEGCLAELKELKCPARVSARYSIEVLQLY.

The interval 365-392 is disordered; it reads KDPETKPSNAGAQKKTRERKTNANAGNG.

It localises to the nucleus. It is found in the nucleolus. Its function is as follows. Ribosome biogenesis factor. May be required for both optimal rDNA transcription and pre-rRNA processing. In Xenopus laevis (African clawed frog), this protein is Nucleolar protein 11 (nol11).